The primary structure comprises 69 residues: MKAKEIRDLTTSEIEEQIKSSKEELFNLRFQLATGQLEETARIRTVRKTIARLKTVAREREIEESKANQ.

Belongs to the universal ribosomal protein uL29 family.

The sequence is that of Large ribosomal subunit protein uL29 from Staphylococcus haemolyticus (strain JCSC1435).